A 199-amino-acid polypeptide reads, in one-letter code: NAD(P)H dehydrogenase (quinone) (199 aa).

One can recognise a Flavodoxin-like domain in the interval 4–190 (VLVLYYSSYG…AMARFQGGHV (187 aa)). FMN-binding positions include 10–15 (SSYGHI) and 78–80 (TRF). NAD(+) is bound at residue Tyr-12. A substrate-binding site is contributed by Trp-98. Residues 113-119 (STATQHG) and His-134 each bind FMN.

Belongs to the WrbA family. FMN serves as cofactor.

It catalyses the reaction a quinone + NADH + H(+) = a quinol + NAD(+). It carries out the reaction a quinone + NADPH + H(+) = a quinol + NADP(+). This Azoarcus sp. (strain BH72) protein is NAD(P)H dehydrogenase (quinone).